Reading from the N-terminus, the 335-residue chain is Glycerol-3-phosphate dehydrogenase [NAD(P)+] (335 aa).

NADPH contacts are provided by Ser-12, Trp-13, Arg-33, Arg-34, and Lys-107. Sn-glycerol 3-phosphate is bound by residues Lys-107, Gly-134, and Ser-136. An NADPH-binding site is contributed by Ala-138. Sn-glycerol 3-phosphate-binding residues include Lys-189, Asp-242, Ser-252, Arg-253, and Asn-254. Lys-189 acts as the Proton acceptor in catalysis. Arg-253 provides a ligand contact to NADPH. Residues Val-277 and Glu-279 each contribute to the NADPH site.

This sequence belongs to the NAD-dependent glycerol-3-phosphate dehydrogenase family.

The protein resides in the cytoplasm. It carries out the reaction sn-glycerol 3-phosphate + NAD(+) = dihydroxyacetone phosphate + NADH + H(+). The catalysed reaction is sn-glycerol 3-phosphate + NADP(+) = dihydroxyacetone phosphate + NADPH + H(+). Its pathway is membrane lipid metabolism; glycerophospholipid metabolism. Catalyzes the reduction of the glycolytic intermediate dihydroxyacetone phosphate (DHAP) to sn-glycerol 3-phosphate (G3P), the key precursor for phospholipid synthesis. The sequence is that of Glycerol-3-phosphate dehydrogenase [NAD(P)+] from Moorella thermoacetica (strain ATCC 39073 / JCM 9320).